The sequence spans 71 residues: UPF0346 protein BCB4264_A2283 (71 aa).

Belongs to the UPF0346 family.

The polypeptide is UPF0346 protein BCB4264_A2283 (Bacillus cereus (strain B4264)).